The primary structure comprises 219 residues: 2-hydroxy-3-keto-5-methylthiopentenyl-1-phosphate phosphatase (219 aa).

Belongs to the HAD-like hydrolase superfamily. MtnX family.

The catalysed reaction is 2-hydroxy-5-methylsulfanyl-3-oxopent-1-enyl phosphate + H2O = 1,2-dihydroxy-5-(methylsulfanyl)pent-1-en-3-one + phosphate. Its pathway is amino-acid biosynthesis; L-methionine biosynthesis via salvage pathway; L-methionine from S-methyl-5-thio-alpha-D-ribose 1-phosphate: step 4/6. Functionally, dephosphorylates 2-hydroxy-3-keto-5-methylthiopentenyl-1-phosphate (HK-MTPenyl-1-P) yielding 1,2-dihydroxy-3-keto-5-methylthiopentene (DHK-MTPene). The sequence is that of 2-hydroxy-3-keto-5-methylthiopentenyl-1-phosphate phosphatase from Bacillus cereus (strain 03BB102).